Reading from the N-terminus, the 91-residue chain is DNA-directed RNA polymerase subunit omega (91 aa).

The protein belongs to the RNA polymerase subunit omega family. In terms of assembly, the RNAP catalytic core consists of 2 alpha, 1 beta, 1 beta' and 1 omega subunit. When a sigma factor is associated with the core the holoenzyme is formed, which can initiate transcription.

The catalysed reaction is RNA(n) + a ribonucleoside 5'-triphosphate = RNA(n+1) + diphosphate. In terms of biological role, promotes RNA polymerase assembly. Latches the N- and C-terminal regions of the beta' subunit thereby facilitating its interaction with the beta and alpha subunits. This chain is DNA-directed RNA polymerase subunit omega, found in Yersinia pestis bv. Antiqua (strain Antiqua).